The following is a 381-amino-acid chain: Cytochrome b (381 aa).

The next 4 helical transmembrane spans lie at 34–54 (FGSL…FLAM), 78–99 (WLMR…YLHI), 114–134 (WNIG…GYVL), and 179–199 (FFAF…IHIL). Residues H84 and H98 each contribute to the heme b site. Heme b is bound by residues H183 and H197. H202 is a binding site for a ubiquinone. 4 helical membrane-spanning segments follow: residues 227 to 247 (YKDL…ALFM), 289 to 309 (LGGV…PLLH), 321 to 341 (LTQI…WIGG), and 348 to 368 (FIMV…FVIP).

The protein belongs to the cytochrome b family. As to quaternary structure, the cytochrome bc1 complex contains 3 respiratory subunits (MT-CYB, CYC1 and UQCRFS1), 2 core proteins (UQCRC1 and UQCRC2) and probably 6 low-molecular weight proteins. Requires heme b as cofactor.

The protein localises to the mitochondrion inner membrane. Its function is as follows. Component of the ubiquinol-cytochrome c reductase complex (complex III or cytochrome b-c1 complex) that is part of the mitochondrial respiratory chain. The b-c1 complex mediates electron transfer from ubiquinol to cytochrome c. Contributes to the generation of a proton gradient across the mitochondrial membrane that is then used for ATP synthesis. This is Cytochrome b (mt-cyb) from Scyliorhinus canicula (Small-spotted catshark).